The primary structure comprises 1694 residues: MTNLPIRFQEVLQLTNLGIGSNSIGFSTLTMESEKYICIRETTPDDKNNVVIIDTDNPSQILRKQMKTDAAIMNPKEPILALKIGQVLQLISIEQKMQLKSCQMQEPLEFWKWISPNTLALVTATSVFHWTKEGNSDPVKVFDRHPDLQNTEIINYRSDSTQNWLVLVAIHQRDGRVVGRIQLYSVEKQISQSIEGHAACFANYIVPGATRPSTLFAISSRTQNASKILVLEVSKGDGPNFQKRASDVFYPPEIGASDFPVAMQVSEKYEVIYMVTKLGYIHLFDLGTANLIYRNRISNENIFVTAFEESTNGIIAVNRKGQVLSVSIDDKNIIPYICNTLNNLELAISMACKNNLPGAEGLLTTQFERYFQQGQYKEAAKVAADSPGSILRNLQTIQKFQSIPPIPDQPSALLQYFGMLLEKGKLNKVESLELVRPVLAQGKKPILEKWLTEDKLECSEQLGDEVRPHDRKLALSIYYRANASDKVITLFAETGEFDKIIAYCKKFNYKPDFMFLLQRMANANPMGAADFAVKLVKEEGGPYIDANQVVELFSARNMIQETSNFLFAILDGDRPQDANLQTKLLEINLLHAPQNADAIMGGQKFTHYNRLRIGGLCEKAGLYQRALEHYTDLADIKRVLSHAGHMVNQEFLVSYFGSLNPEDRMECMRDFLRTNPRQNLQLVVAIAVSYSDQITPEAIIAMFESFRLYEGLYLYLTQVVVTSTSPEVHFKYIEAAAKINQFKEVERMCRDSNYYDPEKTRDFLKEAKLPDQLPLIIVCDRYEFISDLTNYLYKNNLSKYIEAYVQKINPVNTPLVVGALLDLDCQEDYLRNLIMSVRNMCPADSLVEQVEKRNRLKLLLPWLEARVAEGNIEPAIHNALAKIYIDSNKNPEAFLLHNQFYDSKVVGKYCEKRDPYLSFVAYKRGLCDYELIEVTNKNTLFKNQARYLVERQDPDLWAYVLSDQNEYKRSLIDQVVQTALPESTNATEVSATVKAFMDANLPNELIELLEKIVLEGKEFKTAKELQNLLILTAIRADKSRVTDYINRLDNFDGSKLAPIAIESQLYEEAFFMYKKFQFNVEAIDVLITHIGSIERAHDFAERCNQTEVYSKLGVAQLKAEMVKECIESFIKANDTEHYQEVVAAAERKDEYEDLVKFLQMCRKKIKEPAIESELIFAYAKVNKLAEMEDFINSPNSAHIQVVGDRCFENGLYEAAKVLYTNISNFSRLTSCLVKLGQYQAAVDAARKANSTKTWKEVSAACIDAKEFRLAQVCGINIIVHGDELEELIRQYEDRGYFNELISLLESGLASERAHVGMFTELAILYSKYKEEKLMEHLKLFYSRLNVPKVIKACQANQQWPQLTYLYIHYDEHDNAIQTMINHSIEAWDHVLFKETIPKVAKLDLYYSAISFYLEEQPLLINDLLSVLSPRIDHTRAVTLIRSLGHLPLVKPYLVSAQDQNVAALNEALNELYVEEEDYESLRSSIDANSNFGTIALAQKLEKHELLEFRRIAAYLYKKNNRWAQSVELSKKDKLYKDAIQSASDSKNPAIGEELLQYFVDQQNNSAFAACLYTCYDFLKPDAVIELAWRNNILNYSFPYLIQYVKEYTTKVDQLVDDFKARQKKTEEEKEQQNIESSQYQPDLTNLSYGYAATGGMLALPPAVGYQQQQQPQQMYNPNQMMGGFQQNYNQYGGF.

A globular terminal domain region spans residues 1–478 (MTNLPIRFQE…HDRKLALSIY (478 aa)). WD40-like repeat regions lie at residues 23–67 (SIGF…KQMK), 68–107 (TDAA…MQEP), 108–149 (LEFW…PDLQ), 150–195 (NTEI…QSIE), 196–256 (GHAA…EIGA), 257–300 (SDFP…ISNE), and 301–329 (NIFV…VSID). Residues 448 to 464 (EKWLTEDKLECSEQLGD) are binding site for the uncoating ATPase, involved in lattice disassembly. The tract at residues 479-522 (YRANASDKVITLFAETGEFDKIIAYCKKFNYKPDFMFLLQRMAN) is flexible linker. A heavy chain arm region spans residues 523–1694 (ANPMGAADFA…QQNYNQYGGF (1172 aa)). 7 CHCR repeats span residues 537-681 (KEEG…QNLQ), 687-829 (AVSY…QEDY), 834-973 (IMSV…SLID), 980-1125 (LPES…VKEC), 1129-1270 (FIKA…FRLA), 1275-1421 (INII…LLIN), and 1424-1567 (LSVL…NSAF). The segment at 1214 to 1523 (AAKVLYTNIS…YLYKKNNRWA (310 aa)) is involved in binding clathrin light chain. Residues 1551 to 1694 (GEELLQYFVD…QQNYNQYGGF (144 aa)) form a trimerization region. Residues 1610–1640 (KVDQLVDDFKARQKKTEEEKEQQNIESSQYQ) are a coiled coil.

Belongs to the clathrin heavy chain family. In terms of assembly, clathrin coats are formed from molecules containing 3 heavy chains and 3 light chains.

The protein localises to the cytoplasmic vesicle membrane. The protein resides in the membrane. It is found in the coated pit. Functionally, clathrin is the major protein of the polyhedral coat of coated pits and vesicles. The polypeptide is Clathrin heavy chain (chcA) (Dictyostelium discoideum (Social amoeba)).